We begin with the raw amino-acid sequence, 710 residues long: Polyribonucleotide nucleotidyltransferase (710 aa).

Mg(2+) contacts are provided by Asp-487 and Asp-493. The KH domain occupies 554–613; it reads PRIHTMKISAEKIKDVIGKGGAVIRALTEETGTTIEIEDDGTIKIAATEGAAAKEAIRRI. One can recognise an S1 motif domain in the interval 623–691; the sequence is GRIYTGKVAR…RQGRVRLSMK (69 aa). The disordered stretch occupies residues 691–710; sequence KEAVEKPAEEANDASEAKGE.

The protein belongs to the polyribonucleotide nucleotidyltransferase family. Component of the RNA degradosome, which is a multiprotein complex involved in RNA processing and mRNA degradation. Requires Mg(2+) as cofactor.

It localises to the cytoplasm. It catalyses the reaction RNA(n+1) + phosphate = RNA(n) + a ribonucleoside 5'-diphosphate. Involved in mRNA degradation. Catalyzes the phosphorolysis of single-stranded polyribonucleotides processively in the 3'- to 5'-direction. This Vibrio campbellii (strain ATCC BAA-1116) protein is Polyribonucleotide nucleotidyltransferase.